A 512-amino-acid chain; its full sequence is Cytochrome P450 71BT1 (512 aa).

A signal peptide spans 1–24 (MENLFIFLFALLLFCFMLLKLSKK). Residues N111 and N168 are each glycosylated (N-linked (GlcNAc...) asparagine). C447 provides a ligand contact to heme.

Belongs to the cytochrome P450 family.

The chain is Cytochrome P450 71BT1 from Catharanthus roseus (Madagascar periwinkle).